Reading from the N-terminus, the 609-residue chain is UvrABC system protein C (609 aa).

In terms of domain architecture, GIY-YIG spans 16 to 94 (SSPGVYRMYD…IKQYMPRYNV (79 aa)). In terms of domain architecture, UVR spans 203 to 238 (LQVMTELVSKMEASALALEYEQAASYRDQIAALRRV).

Belongs to the UvrC family. As to quaternary structure, interacts with UvrB in an incision complex.

Its subcellular location is the cytoplasm. Its function is as follows. The UvrABC repair system catalyzes the recognition and processing of DNA lesions. UvrC both incises the 5' and 3' sides of the lesion. The N-terminal half is responsible for the 3' incision and the C-terminal half is responsible for the 5' incision. This is UvrABC system protein C from Shewanella sediminis (strain HAW-EB3).